A 272-amino-acid polypeptide reads, in one-letter code: Universal stress protein MT2699 (272 aa).

ATP is bound by residues G15, 109–115, and 123–124; these read GSVGIGR and ST.

The protein belongs to the universal stress protein A family.

In Mycobacterium tuberculosis (strain CDC 1551 / Oshkosh), this protein is Universal stress protein MT2699.